Consider the following 107-residue polypeptide: Toxin MT2730 (107 aa).

A disordered region spans residues 1–42 (MTHKRTKRQPAIAAGLNAPRRNRVGRQHGWPADVPSAEQRRA).

Toxic component of a type II toxin-antitoxin (TA) system. Its toxic effect is neutralized by coexpression with cognate antitoxin MT2731. In Mycobacterium tuberculosis (strain CDC 1551 / Oshkosh), this protein is Toxin MT2730.